We begin with the raw amino-acid sequence, 285 residues long: Nucleotide-binding protein HI_1146 (285 aa).

ATP is bound at residue 8–15 (GRSGAGKS). Residue 56–59 (DIRN) participates in GTP binding.

The protein belongs to the RapZ-like family.

Its function is as follows. Displays ATPase and GTPase activities. This is Nucleotide-binding protein HI_1146 from Haemophilus influenzae (strain ATCC 51907 / DSM 11121 / KW20 / Rd).